The primary structure comprises 349 residues: Twinfilin-2 (349 aa).

ADF-H domains lie at 4 to 139 (QTGI…KHVS) and 177 to 313 (GLAF…DEVH). The interval 324–349 (AKPKGPVGKRGQKRLIKGPGENGEDS) is disordered.

Belongs to the actin-binding proteins ADF family. Twinfilin subfamily. Interacts with G-actin; ADP-actin form and capping protein (CP).

Its subcellular location is the cytoplasm. It localises to the cytoskeleton. It is found in the perinuclear region. Actin-binding protein involved in motile and morphological processes. Inhibits actin polymerization, likely by sequestering G-actin. This is Twinfilin-2 (TWF2) from Gallus gallus (Chicken).